A 154-amino-acid polypeptide reads, in one-letter code: Small ribosomal subunit protein uS13m (154 aa).

The N-terminal 30 residues, 1–30 (MLGLRRSATTLFDISQSLLRNVTFHGLRVQ), are a transit peptide targeting the mitochondrion. The interval 121–154 (RHGLPCRGQRTSTNARTKKGKAVAIAGKKKAPRK) is disordered. A compositionally biased stretch (basic residues) spans 136-154 (RTKKGKAVAIAGKKKAPRK).

It belongs to the universal ribosomal protein uS13 family. As to quaternary structure, part of the small ribosomal subunit.

Its subcellular location is the mitochondrion. Located at the top of the head of the small subunit, it contacts several helices of the 18S rRNA. The polypeptide is Small ribosomal subunit protein uS13m (RPS13) (Arabidopsis thaliana (Mouse-ear cress)).